The chain runs to 89 residues: UPF0147 protein Msed_2034 (89 aa).

This sequence belongs to the UPF0147 family.

The chain is UPF0147 protein Msed_2034 from Metallosphaera sedula (strain ATCC 51363 / DSM 5348 / JCM 9185 / NBRC 15509 / TH2).